Reading from the N-terminus, the 765-residue chain is Ankyrin repeat and protein kinase domain-containing protein 1 (765 aa).

Residues 22–289 enclose the Protein kinase domain; that stretch reads EGDWRLVASG…DITIETDILL (268 aa). ATP-binding positions include 28–36 and lysine 51; that span reads VASGGFSQV. Aspartate 145 serves as the catalytic Proton acceptor. ANK repeat units follow at residues 361–390, 394–423, 427–456, 460–489, 493–522, 526–555, 559–588, 592–621, 625–654, 658–687, 691–720, and 724–753; these read NKVT…DVDC, SGYT…DANR, DGWA…CVDA, EGWT…DPNL, EGKT…ELDA, NLRT…VPDA, SGYG…SLEL, QGWT…NMGA, VNWT…DPNA, SGWT…NVHA, VGWT…QLDV, and VSCT…SVAT.

The protein belongs to the protein kinase superfamily. TKL Ser/Thr protein kinase family. As to expression, highly expressed in brain and weakly expressed in placenta and spinal cord.

The catalysed reaction is L-seryl-[protein] + ATP = O-phospho-L-seryl-[protein] + ADP + H(+). The enzyme catalyses L-threonyl-[protein] + ATP = O-phospho-L-threonyl-[protein] + ADP + H(+). The polypeptide is Ankyrin repeat and protein kinase domain-containing protein 1 (ANKK1) (Homo sapiens (Human)).